A 257-amino-acid polypeptide reads, in one-letter code: Isoprenyl transferase (257 aa).

Aspartate 34 is an active-site residue. Residue aspartate 34 coordinates Mg(2+). Residues 35 to 38 (GNGR), tryptophan 39, arginine 47, histidine 51, and 79 to 81 (STE) each bind substrate. Asparagine 82 functions as the Proton acceptor in the catalytic mechanism. Residues tryptophan 83, arginine 85, arginine 202, and 208–210 (RLS) each bind substrate. Mg(2+) is bound at residue glutamate 221.

Belongs to the UPP synthase family. Homodimer. Mg(2+) is required as a cofactor.

Catalyzes the condensation of isopentenyl diphosphate (IPP) with allylic pyrophosphates generating different type of terpenoids. The chain is Isoprenyl transferase from Geobacillus kaustophilus (strain HTA426).